Consider the following 556-residue polypeptide: 2-succinyl-5-enolpyruvyl-6-hydroxy-3-cyclohexene-1-carboxylate synthase (556 aa).

This sequence belongs to the TPP enzyme family. MenD subfamily. Homodimer. It depends on Mg(2+) as a cofactor. The cofactor is Mn(2+). Thiamine diphosphate is required as a cofactor.

It carries out the reaction isochorismate + 2-oxoglutarate + H(+) = 5-enolpyruvoyl-6-hydroxy-2-succinyl-cyclohex-3-ene-1-carboxylate + CO2. The protein operates within quinol/quinone metabolism; 1,4-dihydroxy-2-naphthoate biosynthesis; 1,4-dihydroxy-2-naphthoate from chorismate: step 2/7. Its pathway is quinol/quinone metabolism; menaquinone biosynthesis. Catalyzes the thiamine diphosphate-dependent decarboxylation of 2-oxoglutarate and the subsequent addition of the resulting succinic semialdehyde-thiamine pyrophosphate anion to isochorismate to yield 2-succinyl-5-enolpyruvyl-6-hydroxy-3-cyclohexene-1-carboxylate (SEPHCHC). This Salmonella typhi protein is 2-succinyl-5-enolpyruvyl-6-hydroxy-3-cyclohexene-1-carboxylate synthase.